Reading from the N-terminus, the 98-residue chain is Large ribosomal subunit protein uL23 (98 aa).

Belongs to the universal ribosomal protein uL23 family. As to quaternary structure, part of the 50S ribosomal subunit. Contacts protein L29, and trigger factor when it is bound to the ribosome.

Its function is as follows. One of the early assembly proteins it binds 23S rRNA. One of the proteins that surrounds the polypeptide exit tunnel on the outside of the ribosome. Forms the main docking site for trigger factor binding to the ribosome. This is Large ribosomal subunit protein uL23 from Cereibacter sphaeroides (strain ATCC 17025 / ATH 2.4.3) (Rhodobacter sphaeroides).